A 196-amino-acid polypeptide reads, in one-letter code: Neurensin-1 (196 aa).

2 helical membrane-spanning segments follow: residues 67–87 (LISGTVFVILGLTVLAVGFLV) and 121–141 (AVLFCIGGTSMAGCLLMSVFA).

The protein belongs to the VMP family. In terms of tissue distribution, expressed predominantly in brain. Also weakly expressed in lung and spleen. In brain, expressed strongly in nerve fibers of the cerebral cortex, anterior cerebral nuclei, hypothalamus, amygdaloid complex, brain stem of the metaencephalon and medulla oblongata, and moderately expressed in soma of neurons of the dentate gyrus of the hippocampus and Purkinje cells of the cerebellum.

The protein localises to the membrane. Its subcellular location is the cell projection. The protein resides in the neuron projection. Its function is as follows. May play an important role in neural organelle transport, and in transduction of nerve signals or in nerve growth. May play a role in neurite extension. This is Neurensin-1 from Mus musculus (Mouse).